A 72-amino-acid chain; its full sequence is Heat-stable enterotoxin A2 (72 aa).

Positions 1 to 19 (MKKSILFIFLSVLSFSPFA) are cleaved as a signal peptide. Positions 20-53 (QDAKPAGSSKEKITLESKKCNIVKKNNESSPESM) are excised as a propeptide. 3 cysteine pairs are disulfide-bonded: cysteine 59-cysteine 64, cysteine 60-cysteine 68, and cysteine 63-cysteine 71.

This sequence belongs to the heat-stable enterotoxin family.

The protein localises to the secreted. In terms of biological role, toxin which activates the particulate form of guanylate cyclase and increases cyclic GMP levels within the host intestinal epithelial cells. The protein is Heat-stable enterotoxin A2 (sta2) of Escherichia coli.